Reading from the N-terminus, the 98-residue chain is MSMVYMNIMMAFTVSLVGLLMYRSHLMSSLLCLEGMMLSLFVMAALTILNSHFTLASMMPIILLVFAACEAALGLSLLVMVSNTYGTDYVQNLNLLQC.

Transmembrane regions (helical) follow at residues Met-1–Met-21, Ser-29–Leu-49, and Ile-61–Val-81.

The protein belongs to the complex I subunit 4L family. Core subunit of respiratory chain NADH dehydrogenase (Complex I) which is composed of 45 different subunits.

It localises to the mitochondrion inner membrane. It catalyses the reaction a ubiquinone + NADH + 5 H(+)(in) = a ubiquinol + NAD(+) + 4 H(+)(out). In terms of biological role, core subunit of the mitochondrial membrane respiratory chain NADH dehydrogenase (Complex I) which catalyzes electron transfer from NADH through the respiratory chain, using ubiquinone as an electron acceptor. Part of the enzyme membrane arm which is embedded in the lipid bilayer and involved in proton translocation. The chain is NADH-ubiquinone oxidoreductase chain 4L (MT-ND4L) from Bos indicus (Zebu).